A 592-amino-acid polypeptide reads, in one-letter code: Cyclin-dependent kinase-like 3 (592 aa).

A Protein kinase domain is found at 4–286 (YETLGKVGEG…SSDLLHHEYF (283 aa)). Residues 10–18 (VGEGSYGTV) and Lys-33 contribute to the ATP site. A [NKR]KIAxRE motif is present at residues 44–50 (NKIAMRE). Catalysis depends on Asp-125, which acts as the Proton acceptor. The residue at position 158 (Thr-158) is a Phosphothreonine. Tyr-160 bears the Phosphotyrosine mark. Over residues 368–379 (GDISEPKKKEYE) the composition is skewed to basic and acidic residues. 2 disordered regions span residues 368-390 (GDISEPKKKEYEGGLGQQDANEN) and 459-485 (RAKKRRTSSQSIGQVMPNSRQEDPGPI). Polar residues predominate over residues 466–477 (SSQSIGQVMPNS).

It belongs to the protein kinase superfamily. CMGC Ser/Thr protein kinase family. CDC2/CDKX subfamily.

The protein resides in the cytoplasm. The enzyme catalyses L-seryl-[protein] + ATP = O-phospho-L-seryl-[protein] + ADP + H(+). It catalyses the reaction L-threonyl-[protein] + ATP = O-phospho-L-threonyl-[protein] + ADP + H(+). This Homo sapiens (Human) protein is Cyclin-dependent kinase-like 3.